The sequence spans 60 residues: Large ribosomal subunit protein uL30 (60 aa).

The protein belongs to the universal ribosomal protein uL30 family. As to quaternary structure, part of the 50S ribosomal subunit.

The chain is Large ribosomal subunit protein uL30 from Dehalococcoides mccartyi (strain CBDB1).